The chain runs to 1722 residues: Signal-induced proliferation-associated 1-like protein 2 (1722 aa).

Disordered stretches follow at residues 1–29 (MSDP…RAMQ) and 45–73 (MGPA…PAVP). Residues 57-66 (EGGGGGGGPA) are compositionally biased toward gly residues. Phosphoserine is present on residues S149, S380, and S384. Residues 362–404 (ASAASQTPVPVGPAGGCESPLGSKEDLNAKENPDADEGDGKSN) form a disordered region. Basic and acidic residues predominate over residues 384-403 (SKEDLNAKENPDADEGDGKS). A Rap-GAP domain is found at 596–813 (LLKLDEQGLS…RTRHEYLKDL (218 aa)). The PDZ domain maps to 951-1027 (EMTLRRNGLG…VKVVIIQPHE (77 aa)). At S1030 the chain carries Phosphoserine. 3 disordered regions span residues 1068-1172 (HRVP…DHED), 1197-1246 (ERAL…FGSG), and 1328-1361 (AADG…KSTG). Composition is skewed to low complexity over residues 1091-1103 (LQCQ…AQAA) and 1120-1131 (SSPSNQSSSSDP). Over residues 1197-1218 (ERALQKDGSCKDSPNKLSHIGD) the composition is skewed to basic and acidic residues. Residues 1220-1237 (SCSSHSSSNTLSSNTSSN) show a composition bias toward low complexity. Residue S1245 is modified to Phosphoserine. The segment covering 1328-1355 (AADGSMGDLSEVSSHSSGSHRSGSPSTH) has biased composition (low complexity). S1461, S1472, S1478, S1488, S1549, S1552, and S1591 each carry phosphoserine. Residues 1652–1712 (STLTGKVNQL…ATAQLRTFTE (61 aa)) adopt a coiled-coil conformation.

The sequence is that of Signal-induced proliferation-associated 1-like protein 2 (Sipa1l2) from Rattus norvegicus (Rat).